A 174-amino-acid chain; its full sequence is MLRIAVTGIPGIGKSTVVAKAAEKLADQPGFKIGGIQTAEIRKEGQREGFSIMDLATGKTGVLGSIRESGPRVGKYHVNLEDLEKIGANALRSAMDCDLIVIDEVGTMELKSEAFVSAVKVVLESDKPVLAVLHRSSSHQLVQRMRREFEVLVVNEKNRDGLPGKIANRFREMR.

ATP is bound by residues 8–15 (GIPGIGKS) and 99–106 (LIVIDEVG).

This sequence belongs to the THEP1 NTPase family.

It catalyses the reaction a ribonucleoside 5'-triphosphate + H2O = a ribonucleoside 5'-diphosphate + phosphate + H(+). Functionally, has nucleotide phosphatase activity towards ATP, GTP, CTP, TTP and UTP. May hydrolyze nucleoside diphosphates with lower efficiency. This chain is Nucleoside-triphosphatase THEP1, found in Methanosarcina barkeri (strain Fusaro / DSM 804).